Consider the following 68-residue polypeptide: Antimicrobial peptide Eval418 (68 aa).

The first 23 residues, 1–23 (MRTQLAVLLVALVLLQMIAQSEA), serve as a signal peptide directing secretion. Residue Ile36 is modified to Isoleucine amide. The propeptide occupies 37-68 (GKRGLRNLDDLDDVFDDDLSAADLEFLKQLMR).

The protein belongs to the non-disulfide-bridged peptide (NDBP) superfamily. Short antimicrobial peptide (group 4) family. In terms of tissue distribution, expressed by the venom gland.

The protein resides in the secreted. Probable antimicrobial peptide. Shows dose-dependent and time-dependent inactivation of herpes simplex virus type 1 (HSV-1) and dose-dependent inhibition of HSV-1 viral attachment to host cells. Scarcely suppress an established HSV-1 infection due to poor cellular uptake. The sequence is that of Antimicrobial peptide Eval418 from Euscorpiops validus (Scorpion).